The chain runs to 457 residues: Exodeoxyribonuclease 7 large subunit (457 aa).

It belongs to the XseA family. As to quaternary structure, heterooligomer composed of large and small subunits.

It localises to the cytoplasm. The catalysed reaction is Exonucleolytic cleavage in either 5'- to 3'- or 3'- to 5'-direction to yield nucleoside 5'-phosphates.. In terms of biological role, bidirectionally degrades single-stranded DNA into large acid-insoluble oligonucleotides, which are then degraded further into small acid-soluble oligonucleotides. This chain is Exodeoxyribonuclease 7 large subunit, found in Enterobacter sp. (strain 638).